A 440-amino-acid chain; its full sequence is 3-phosphoshikimate 1-carboxyvinyltransferase (440 aa).

Residues Lys-28, Ser-29, and Arg-33 each coordinate 3-phosphoshikimate. Residue Lys-28 participates in phosphoenolpyruvate binding. Positions 98 and 126 each coordinate phosphoenolpyruvate. 4 residues coordinate 3-phosphoshikimate: Ser-171, Gln-173, Asp-318, and Lys-345. Gln-173 contributes to the phosphoenolpyruvate binding site. The active-site Proton acceptor is Asp-318. Phosphoenolpyruvate contacts are provided by Arg-349 and Arg-391.

Belongs to the EPSP synthase family. As to quaternary structure, monomer.

It is found in the cytoplasm. The enzyme catalyses 3-phosphoshikimate + phosphoenolpyruvate = 5-O-(1-carboxyvinyl)-3-phosphoshikimate + phosphate. The protein operates within metabolic intermediate biosynthesis; chorismate biosynthesis; chorismate from D-erythrose 4-phosphate and phosphoenolpyruvate: step 6/7. Functionally, catalyzes the transfer of the enolpyruvyl moiety of phosphoenolpyruvate (PEP) to the 5-hydroxyl of shikimate-3-phosphate (S3P) to produce enolpyruvyl shikimate-3-phosphate and inorganic phosphate. The polypeptide is 3-phosphoshikimate 1-carboxyvinyltransferase (Anaeromyxobacter sp. (strain K)).